Consider the following 418-residue polypeptide: UPF0261 protein BMEII0128 (418 aa).

This sequence belongs to the UPF0261 family.

This is UPF0261 protein BMEII0128 from Brucella melitensis biotype 1 (strain ATCC 23456 / CCUG 17765 / NCTC 10094 / 16M).